Consider the following 836-residue polypeptide: Ethylene receptor 3 (836 aa).

Helical transmembrane passes span 137–157, 166–186, and 204–224; these read LIAA…AGLR, LVQF…TAFT, and LTAL…PQLL. Residues cysteine 176 and histidine 180 each coordinate Cu cation. Residues 269–413 enclose the GAF domain; it reads DRHTVLYTTL…VVAGQVAVAL (145 aa). Residues 416–452 are a coiled coil; that stretch reads ATLLEESRAMRDRLAEQNRELLQARRDALMANEARQA. The Histidine kinase domain occupies 457–691; the sequence is MSQGMRRPIH…LVLRFQLQSP (235 aa). One can recognise a Response regulatory domain in the interval 718 to 834; that stretch reads LLIDDDDDIN…LKDELARILQ (117 aa).

It belongs to the ethylene receptor family. The cofactor is Cu cation.

The protein localises to the endoplasmic reticulum membrane. The enzyme catalyses ATP + protein L-histidine = ADP + protein N-phospho-L-histidine.. Its function is as follows. Ethylene receptor related to bacterial two-component regulators. Acts as a negative regulator of ethylene signaling. May delay the transition from the vegetative stage to the floral stage by up-regulating GI (GIGANTEA) and RCN1 and cause starch accumulation in stems by down-regulating the alpha-amylase AMY3D. This Oryza sativa subsp. japonica (Rice) protein is Ethylene receptor 3 (ETR3).